A 74-amino-acid polypeptide reads, in one-letter code: Putative membrane protein insertion efficiency factor (74 aa).

It belongs to the UPF0161 family.

The protein localises to the cell inner membrane. Functionally, could be involved in insertion of integral membrane proteins into the membrane. This is Putative membrane protein insertion efficiency factor from Leptospira interrogans serogroup Icterohaemorrhagiae serovar copenhageni (strain Fiocruz L1-130).